A 557-amino-acid chain; its full sequence is 2-isopropylmalate synthase (557 aa).

One can recognise a Pyruvate carboxyltransferase domain in the interval 31–304; sequence PTWCSVDLRD…DPGLNFASML (274 aa). Residues D40, H243, H245, and N279 each contribute to the Mg(2+) site. Residues 439 to 557 are regulatory domain; that stretch reads IENPIKFLNF…NTMIKDSAAV (119 aa).

This sequence belongs to the alpha-IPM synthase/homocitrate synthase family. LeuA type 2 subfamily. Homodimer. Mg(2+) is required as a cofactor.

The protein resides in the cytoplasm. The catalysed reaction is 3-methyl-2-oxobutanoate + acetyl-CoA + H2O = (2S)-2-isopropylmalate + CoA + H(+). Its pathway is amino-acid biosynthesis; L-leucine biosynthesis; L-leucine from 3-methyl-2-oxobutanoate: step 1/4. Its function is as follows. Catalyzes the condensation of the acetyl group of acetyl-CoA with 3-methyl-2-oxobutanoate (2-ketoisovalerate) to form 3-carboxy-3-hydroxy-4-methylpentanoate (2-isopropylmalate). The polypeptide is 2-isopropylmalate synthase (Desulfitobacterium hafniense (strain Y51)).